We begin with the raw amino-acid sequence, 467 residues long: Glutamate--tRNA ligase (467 aa).

The 'HIGH' region motif lies at 9 to 19; that stretch reads PSPTGYLHIGG. The 'KMSKS' region motif lies at 237–241; sequence KLSKR. Lys-240 contributes to the ATP binding site.

Belongs to the class-I aminoacyl-tRNA synthetase family. Glutamate--tRNA ligase type 1 subfamily. As to quaternary structure, monomer.

The protein localises to the cytoplasm. The enzyme catalyses tRNA(Glu) + L-glutamate + ATP = L-glutamyl-tRNA(Glu) + AMP + diphosphate. Catalyzes the attachment of glutamate to tRNA(Glu) in a two-step reaction: glutamate is first activated by ATP to form Glu-AMP and then transferred to the acceptor end of tRNA(Glu). The sequence is that of Glutamate--tRNA ligase from Xanthomonas campestris pv. campestris (strain B100).